A 109-amino-acid polypeptide reads, in one-letter code: Nucleoid-associated protein CKO_02678 (109 aa).

The segment at 89-109 is disordered; sequence KEKMASVSSGMQLPPGFKMPF.

The protein belongs to the YbaB/EbfC family. Homodimer.

It localises to the cytoplasm. The protein localises to the nucleoid. Binds to DNA and alters its conformation. May be involved in regulation of gene expression, nucleoid organization and DNA protection. The sequence is that of Nucleoid-associated protein CKO_02678 from Citrobacter koseri (strain ATCC BAA-895 / CDC 4225-83 / SGSC4696).